Here is a 229-residue protein sequence, read N- to C-terminus: UPF0758 protein CLH_0547 (229 aa).

The MPN domain occupies 107-229; that stretch reads KIMSPNDIAM…FISLKEKGFI (123 aa). The Zn(2+) site is built by His178, His180, and Asp191. A JAMM motif motif is present at residues 178–191; that stretch reads HNHPSGDPTPSKED.

This sequence belongs to the UPF0758 family.

The chain is UPF0758 protein CLH_0547 from Clostridium botulinum (strain Alaska E43 / Type E3).